Consider the following 440-residue polypeptide: uncharacterized protein (440 aa).

The next 12 membrane-spanning stretches (helical) occupy residues V24–A44, A47–I67, F93–M113, V117–L137, I155–A175, I183–F203, L229–L249, V276–V296, P323–I343, A346–L366, I379–V399, and A400–T420.

This sequence belongs to the amino acid-polyamine-organocation (APC) superfamily.

The protein resides in the cell membrane. Its function is as follows. Probable amino-acid or metabolite transport protein. This is an uncharacterized protein from Mycobacterium bovis (strain ATCC BAA-935 / AF2122/97).